The chain runs to 351 residues: Modulator of apoptosis 1 (351 aa).

The LIR signature appears at 49-52; it reads YRLL. The interval 120–127 is BH3-like; it reads LSRALGHE. The interval 202-205 is RASSF1-binding; the sequence is KRRR.

The protein belongs to the PNMA family. As to quaternary structure, homodimer. Under normal circumstances, held in an inactive conformation by an intramolecular interaction. Interacts with BAX. Binding to RASSF1 isoform A (RASSF1A) relieves this inhibitory interaction and allows further binding to BAX. Also binds to BCL2 and BCLX. Recruited to the TNFRSF1A and TNFRSF10A complexes in response to their respective cognate ligand, after internalization. Interacts with TRIM39. Interacts with RASSF6. Interacts with ATG8 proteins MAP1LC3A, MAP1LC3B and MAP1LC3C. Does not interact with ATG8 proteins GABARAPL1, GABARAPL2 and GABARAP. Interacts with SQSTM1; promoting dissociation of SQSTM1 inclusion bodies that sequester KEAP1. Ubiquitinated and degraded during mitotic exit by APC/C-Cdh1, this modification is inhibited by TRIM39. Widely expressed, with high levels in heart and brain.

It is found in the cytoplasm. Its subcellular location is the cytosol. The protein resides in the mitochondrion outer membrane. It localises to the extracellular vesicle membrane. Its function is as follows. Retrotransposon-derived protein that forms virion-like capsids. Acts as an effector of BAX during apoptosis: enriched at outer mitochondria membrane and associates with BAX upon induction of apoptosis, facilitating BAX-dependent mitochondrial outer membrane permeabilization and apoptosis. Required for death receptor-dependent apoptosis. When associated with RASSF1, promotes BAX conformational change and translocation to mitochondrial membranes in response to TNF and TNFSF10 stimulation. Also promotes autophagy: promotes phagophore closure via association with ATG8 proteins. Acts as an inhibitor of the NFE2L2/NRF2 pathway via interaction with SQSTM1: interaction promotes dissociation of SQSTM1 inclusion bodies that sequester KEAP1, relieving inactivation of the BCR(KEAP1) complex. In Homo sapiens (Human), this protein is Modulator of apoptosis 1.